Reading from the N-terminus, the 372-residue chain is tRNA-specific 2-thiouridylase MnmA (372 aa).

ATP-binding positions include 13–20 (GMSGGVDS) and methionine 39. The tract at residues 99-101 (NPD) is interaction with target base in tRNA. Cysteine 104 serves as the catalytic Nucleophile. Residues cysteine 104 and cysteine 200 are joined by a disulfide bond. Glycine 128 lines the ATP pocket. Residues 150–152 (KDQ) are interaction with tRNA. Cysteine 200 serves as the catalytic Cysteine persulfide intermediate. The tract at residues 310–311 (RY) is interaction with tRNA.

This sequence belongs to the MnmA/TRMU family.

It is found in the cytoplasm. It catalyses the reaction S-sulfanyl-L-cysteinyl-[protein] + uridine(34) in tRNA + AH2 + ATP = 2-thiouridine(34) in tRNA + L-cysteinyl-[protein] + A + AMP + diphosphate + H(+). Catalyzes the 2-thiolation of uridine at the wobble position (U34) of tRNA, leading to the formation of s(2)U34. The polypeptide is tRNA-specific 2-thiouridylase MnmA (Bacillus pumilus (strain SAFR-032)).